The following is a 303-amino-acid chain: MRLVLFLNMGGAMNLQDCEVFLKNMFNDPYILGIKNRFLRKFVAWIITKARVKAMQENYKKMGGKSPLNELTQSLCDKLNLKQDEFKFDFVNLYVPPFATEILQKYTLNENDEIILFPLYPHHSCTTVTSSLEILQDEISKQKIQAKVKTIDIFYKNKLYNEMIVSHILAKKNKFDAKILIFSAHSLPQSIIDKGDLYEKHVKDHVEILKEKLKDHFDEFILAYQSKLGPVKWLEPNTSDVLANLNDKALIYPISFCIDCSETIFELGMEYKHLAKCDYDLISCPNDSDEFAQFILKYLSDLN.

Positions 185 and 262 each coordinate Fe cation.

This sequence belongs to the ferrochelatase family.

The protein localises to the cytoplasm. It carries out the reaction heme b + 2 H(+) = protoporphyrin IX + Fe(2+). The protein operates within porphyrin-containing compound metabolism; protoheme biosynthesis; protoheme from protoporphyrin-IX: step 1/1. Catalyzes the ferrous insertion into protoporphyrin IX. The sequence is that of Ferrochelatase from Campylobacter jejuni subsp. doylei (strain ATCC BAA-1458 / RM4099 / 269.97).